Reading from the N-terminus, the 398-residue chain is Phosphoglycerate kinase (398 aa).

Substrate is bound by residues D21–N23, R36, H59–R62, R117, and R150. Residues K200, E321, and G351–S354 each bind ATP.

It belongs to the phosphoglycerate kinase family. In terms of assembly, monomer.

Its subcellular location is the cytoplasm. It catalyses the reaction (2R)-3-phosphoglycerate + ATP = (2R)-3-phospho-glyceroyl phosphate + ADP. It functions in the pathway carbohydrate degradation; glycolysis; pyruvate from D-glyceraldehyde 3-phosphate: step 2/5. This is Phosphoglycerate kinase from Wolbachia sp. subsp. Drosophila simulans (strain wRi).